Here is a 413-residue protein sequence, read N- to C-terminus: Serine/threonine transporter SstT (413 aa).

10 consecutive transmembrane segments (helical) span residues 18–38 (LSLV…ALFA), 52–72 (FVSA…MASI), 86–106 (ILFL…IASM), 119–139 (IAVS…LSVV), 145–165 (ALMN…GVAI), 196–216 (LGIF…ALIG), 221–241 (LAVL…LIVF), 292–312 (VSIP…ITVL), 320–340 (LGIA…AICA), and 360–380 (LFGI…IIGV).

It belongs to the dicarboxylate/amino acid:cation symporter (DAACS) (TC 2.A.23) family.

The protein resides in the cell inner membrane. It carries out the reaction L-serine(in) + Na(+)(in) = L-serine(out) + Na(+)(out). The catalysed reaction is L-threonine(in) + Na(+)(in) = L-threonine(out) + Na(+)(out). Functionally, involved in the import of serine and threonine into the cell, with the concomitant import of sodium (symport system). This is Serine/threonine transporter SstT from Pseudomonas fluorescens (strain Pf0-1).